The chain runs to 904 residues: Disintegrin and metalloproteinase domain-containing protein 22 (904 aa).

The signal sequence occupies residues 1–23 (MQAAAAASFWLLCVLGTCPLARC). The propeptide occupies 24 to 223 (GRAGVASLKG…LKPRLKRRKR (200 aa)). At 24–734 (GRAGVASLKG…LSGNGVAGTN (711 aa)) the chain is on the extracellular side. N163 is a glycosylation site (N-linked (GlcNAc...) asparagine). The 200-residue stretch at 237-436 (KYIELMIVND…GGGACLFNKP (200 aa)) folds into the Peptidase M12B domain. 17 cysteine pairs are disulfide-bonded: C347–C431, C390–C415, C392–C399, C445–C475, C456–C472, C458–C464, C471–C492, C483–C489, C488–C514, C501–C521, C508–C540, C533–C545, C552–C603, C567–C633, C581–C591, C598–C661, and C655–C666. In terms of domain architecture, Disintegrin spans 442–529 (PPECGNGFIE…QCAPNVHKMD (88 aa)). N517 carries N-linked (GlcNAc...) asparagine glycosylation. N-linked (GlcNAc...) asparagine glycosylation is present at N632. A glycan (N-linked (GlcNAc...) asparagine) is linked at N673. The 38-residue stretch at 673-710 (NFSTCSSSKAGTVCSGNGVCSNELKCVCNRHWTGADCG) folds into the EGF-like domain. Disulfide bonds link C677–C692, C686–C698, and C700–C709. A helical membrane pass occupies residues 735–755 (IIIGIIAGTILVLALILGITA). At 756 to 857 (WGYKNYREQR…RFRPRSNSTE (102 aa)) the chain is on the cytoplasmic side. The disordered stretch occupies residues 769–904 (QGDYVKKPGD…QSARLWETSI (136 aa)). Low complexity predominate over residues 789 to 808 (GGSTNSASSSKKRSNGLSHS). 3 positions are modified to phosphoserine: S808, K817, and S832. Basic and acidic residues predominate over residues 809-827 (WSERIPDTKHISDICENGR). The span at 840–851 (NKKKIRGKRFRP) shows a compositional bias: basic residues. 5 positions are modified to phosphoserine: S855, S860, S864, S868, and M882. The span at 860–875 (SPAKSPSSSTGSIASS) shows a compositional bias: low complexity.

As to quaternary structure, interacts with LGI1. Can bind to LGI4. Interacts with KCNA2, DLG2 and DLG4. Interacts with ADAM11. Interacts (via C-terminus) with YWHAB/14-3-3 beta. Interacts (via C-terminus) with YWHAZ/14-3-3 zeta. The precursor is cleaved by a furin endopeptidase. In terms of tissue distribution, detected in juxtaparanodal zones in the central nervous system and at nerve terminal plexuses of basket cells in the cerebellum (at protein level). Expressed at high levels in the brain. Strongly expressed in cerebellar granule cells and hippocampus. In spinal cord, expression is restricted to gray matter.

The protein localises to the cell membrane. The protein resides in the cell projection. It localises to the axon. In terms of biological role, probable ligand for integrin in the brain. This is a non catalytic metalloprotease-like protein. Involved in regulation of cell adhesion and spreading and in inhibition of cell proliferation. Neuronal receptor for LGI1. The sequence is that of Disintegrin and metalloproteinase domain-containing protein 22 (Adam22) from Mus musculus (Mouse).